The primary structure comprises 309 residues: Probable RNA polymerase II nuclear localization protein SLC7A6OS (309 aa).

Disordered stretches follow at residues 101–134 and 233–287; these read GRYR…AGNS and PEDI…QRMW. A compositionally biased stretch (low complexity) spans 106 to 118; it reads LSSRRSLGTTSSG. 2 stretches are compositionally biased toward acidic residues: residues 233 to 245 and 254 to 263; these read PEDI…DENS and PEEESSDGDE. Residues Ser-302 and Ser-308 each carry the phosphoserine modification.

The protein belongs to the IWR1/SLC7A6OS family.

Its subcellular location is the cytoplasm. The protein resides in the nucleus. In terms of biological role, directs RNA polymerase II nuclear import. The protein is Probable RNA polymerase II nuclear localization protein SLC7A6OS (SLC7A6OS) of Homo sapiens (Human).